The chain runs to 390 residues: Putative nickel insertion protein (390 aa).

It belongs to the LarC family.

This Geobacter metallireducens (strain ATCC 53774 / DSM 7210 / GS-15) protein is Putative nickel insertion protein.